A 319-amino-acid polypeptide reads, in one-letter code: Beta-ketoacyl-[acyl-carrier-protein] synthase III (319 aa).

Active-site residues include cysteine 115 and histidine 246. The ACP-binding stretch occupies residues 247 to 251 (QANLR). Asparagine 276 is a catalytic residue.

This sequence belongs to the thiolase-like superfamily. FabH family. In terms of assembly, homodimer.

The protein resides in the cytoplasm. It carries out the reaction malonyl-[ACP] + acetyl-CoA + H(+) = 3-oxobutanoyl-[ACP] + CO2 + CoA. It participates in lipid metabolism; fatty acid biosynthesis. Its function is as follows. Catalyzes the condensation reaction of fatty acid synthesis by the addition to an acyl acceptor of two carbons from malonyl-ACP. Catalyzes the first condensation reaction which initiates fatty acid synthesis and may therefore play a role in governing the total rate of fatty acid production. Possesses both acetoacetyl-ACP synthase and acetyl transacylase activities. Its substrate specificity determines the biosynthesis of branched-chain and/or straight-chain of fatty acids. The sequence is that of Beta-ketoacyl-[acyl-carrier-protein] synthase III from Coxiella burnetii (strain CbuK_Q154) (Coxiella burnetii (strain Q154)).